The primary structure comprises 834 residues: Serine/threonine-protein kinase TNNI3K (834 aa).

Gly2 is lipidated: N-myristoyl glycine. Residues 21–49 (SESYAIIIERLEDDLQIKENEFQELRHIF) adopt a coiled-coil conformation. ANK repeat units follow at residues 66 to 96 (RGLSLLHLCCACGGNKSHIRALMLKGLRPSR), 100 to 129 (NGFPALHLAVYKDSLELITSLLHSGADVQQ), 133 to 162 (GGLTALHIAAIAGHPEAVEVLLQHGANVNV), 166 to 195 (VFFTPLHIAAYYGHEQVTSVLLKFGADVNV), 199 to 229 (VGDRPLHLASAKGFFNIVKLLVEGNKADVNA), 233 to 262 (EDHVPLHFCSRFGHHNIVSYLLQSDLEVQP), 268 to 297 (YGDTPLHLACYNGNFEVAKEIVHVTGTESL), 303 to 334 (FSETAFHSACTYGKNIDLVKFLLDQNAVNINH), 338 to 367 (DGHTGLHSACYHGHIRLVQFLLDNGADMNL), and 380 to 409 (DEQTCLMWAYEKGHDAIVTLLKHYKRPQDE). The Protein kinase domain occupies 462–722 (IEFHEIIGSG…EVVRKLEECL (261 aa)). ATP-binding positions include 468–476 (IGSGSFGKV) and Lys489. The active-site Proton acceptor is the Asp587. The disordered stretch occupies residues 815–834 (PMSPMHLHSRRNSGSFEDGN).

The protein belongs to the protein kinase superfamily. TKL Ser/Thr protein kinase family. MAP kinase kinase kinase subfamily. In terms of assembly, interacts with TNNI3, ACTC, ACTA1, MYBPC3, AIP, FABP3 and HADHB. Mg(2+) serves as cofactor. Autophosphorylated.

It localises to the nucleus. The protein localises to the cytoplasm. It carries out the reaction L-seryl-[protein] + ATP = O-phospho-L-seryl-[protein] + ADP + H(+). It catalyses the reaction L-threonyl-[protein] + ATP = O-phospho-L-threonyl-[protein] + ADP + H(+). Its function is as follows. May play a role in cardiac physiology. The sequence is that of Serine/threonine-protein kinase TNNI3K from Mus musculus (Mouse).